The primary structure comprises 150 residues: Transcriptional repressor NrdR (150 aa).

A zinc finger lies at 3–34; that stretch reads CPFCNFSDSKVVDSRPDKGGAAIRRRRECESC. Residues 49–139 form the ATP-cone domain; sequence PLVTKRDGRR…VYRSFKDINE (91 aa).

Belongs to the NrdR family. Zn(2+) serves as cofactor.

Its function is as follows. Negatively regulates transcription of bacterial ribonucleotide reductase nrd genes and operons by binding to NrdR-boxes. In Citrifermentans bemidjiense (strain ATCC BAA-1014 / DSM 16622 / JCM 12645 / Bem) (Geobacter bemidjiensis), this protein is Transcriptional repressor NrdR.